The sequence spans 535 residues: Ribonuclease Y 2 (535 aa).

The helical transmembrane segment at 1–21 threads the bilayer; the sequence is MLITGLIIGCLLIGLVIGYVV. Residues 207 to 268 enclose the KH domain; that stretch reads LEHTVTVPNG…IRREVARVAL (62 aa). The HD domain occupies 334–427; sequence VLLHSIEVAQ…VAAADAISGA (94 aa).

The protein belongs to the RNase Y family.

The protein localises to the cell membrane. Endoribonuclease that initiates mRNA decay. This is Ribonuclease Y 2 from Levilactobacillus brevis (strain ATCC 367 / BCRC 12310 / CIP 105137 / JCM 1170 / LMG 11437 / NCIMB 947 / NCTC 947) (Lactobacillus brevis).